We begin with the raw amino-acid sequence, 145 residues long: Ribosomal protein uL24-like (145 aa).

2 disordered regions span residues 1–21 and 122–145; these read MKFN…HFNA and KAKS…KMQE. Glycyl lysine isopeptide (Lys-Gly) (interchain with G-Cter in SUMO2) cross-links involve residues lysine 136 and lysine 142.

The protein belongs to the universal ribosomal protein uL24 family.

The protein is Ribosomal protein uL24-like (RPL26L1) of Homo sapiens (Human).